The following is a 305-amino-acid chain: Formamidopyrimidine-DNA glycosylase (305 aa).

Pro2 (schiff-base intermediate with DNA) is an active-site residue. Residue Glu3 is the Proton donor of the active site. Lys59 acts as the Proton donor; for beta-elimination activity in catalysis. Residues His92, Arg111, and Arg154 each coordinate DNA. An FPG-type zinc finger spans residues 239 to 273 (QVFDRAGEPCPVCGTPIRKVAVAQRGTHFCPRCQP). Residue Arg263 is the Proton donor; for delta-elimination activity of the active site. The interval 282–305 (PRRARPGRRGNSVRVAAEPPGTYE) is disordered.

The protein belongs to the FPG family. Monomer. It depends on Zn(2+) as a cofactor.

It carries out the reaction Hydrolysis of DNA containing ring-opened 7-methylguanine residues, releasing 2,6-diamino-4-hydroxy-5-(N-methyl)formamidopyrimidine.. It catalyses the reaction 2'-deoxyribonucleotide-(2'-deoxyribose 5'-phosphate)-2'-deoxyribonucleotide-DNA = a 3'-end 2'-deoxyribonucleotide-(2,3-dehydro-2,3-deoxyribose 5'-phosphate)-DNA + a 5'-end 5'-phospho-2'-deoxyribonucleoside-DNA + H(+). Involved in base excision repair of DNA damaged by oxidation or by mutagenic agents. Acts as a DNA glycosylase that recognizes and removes damaged bases. Has a preference for oxidized purines, such as 7,8-dihydro-8-oxoguanine (8-oxoG). Has AP (apurinic/apyrimidinic) lyase activity and introduces nicks in the DNA strand. Cleaves the DNA backbone by beta-delta elimination to generate a single-strand break at the site of the removed base with both 3'- and 5'-phosphates. The protein is Formamidopyrimidine-DNA glycosylase of Symbiobacterium thermophilum (strain DSM 24528 / JCM 14929 / IAM 14863 / T).